Here is a 714-residue protein sequence, read N- to C-terminus: Polyribonucleotide nucleotidyltransferase (714 aa).

Residues D488 and D494 each coordinate Mg(2+). A KH domain is found at P555–I614. Residues G624–K692 enclose the S1 motif domain.

The protein belongs to the polyribonucleotide nucleotidyltransferase family. Mg(2+) is required as a cofactor.

The protein localises to the cytoplasm. The catalysed reaction is RNA(n+1) + phosphate = RNA(n) + a ribonucleoside 5'-diphosphate. Functionally, involved in mRNA degradation. Catalyzes the phosphorolysis of single-stranded polyribonucleotides processively in the 3'- to 5'-direction. This chain is Polyribonucleotide nucleotidyltransferase, found in Brucella ovis (strain ATCC 25840 / 63/290 / NCTC 10512).